Reading from the N-terminus, the 363-residue chain is Probable dual-specificity RNA methyltransferase RlmN (363 aa).

Glu-106 (proton acceptor) is an active-site residue. The Radical SAM core domain occupies 112–345 (HEYGNSVCVT…VTIRREQGHD (234 aa)). A disulfide bridge links Cys-119 with Cys-350. Positions 126, 130, and 133 each coordinate [4Fe-4S] cluster. Residues 176–177 (GE), Ser-208, 231–233 (SLH), and Asn-307 each bind S-adenosyl-L-methionine. Cys-350 serves as the catalytic S-methylcysteine intermediate.

The protein belongs to the radical SAM superfamily. RlmN family. It depends on [4Fe-4S] cluster as a cofactor.

It is found in the cytoplasm. The enzyme catalyses adenosine(2503) in 23S rRNA + 2 reduced [2Fe-2S]-[ferredoxin] + 2 S-adenosyl-L-methionine = 2-methyladenosine(2503) in 23S rRNA + 5'-deoxyadenosine + L-methionine + 2 oxidized [2Fe-2S]-[ferredoxin] + S-adenosyl-L-homocysteine. It catalyses the reaction adenosine(37) in tRNA + 2 reduced [2Fe-2S]-[ferredoxin] + 2 S-adenosyl-L-methionine = 2-methyladenosine(37) in tRNA + 5'-deoxyadenosine + L-methionine + 2 oxidized [2Fe-2S]-[ferredoxin] + S-adenosyl-L-homocysteine. In terms of biological role, specifically methylates position 2 of adenine 2503 in 23S rRNA and position 2 of adenine 37 in tRNAs. This chain is Probable dual-specificity RNA methyltransferase RlmN, found in Bacillus velezensis (strain DSM 23117 / BGSC 10A6 / LMG 26770 / FZB42) (Bacillus amyloliquefaciens subsp. plantarum).